Consider the following 1461-residue polypeptide: A disintegrin and metalloproteinase with thrombospondin motifs adt-1 (1461 aa).

The N-terminal stretch at 1-21 (MPPFYIVITFLLSTVFRISQS) is a signal peptide. Residues 22–163 (VHHHLNEEEL…HLQKERHLVY (142 aa)) constitute a propeptide that is removed on maturation. N-linked (GlcNAc...) asparagine glycosylation is present at asparagine 69. Positions 190 to 197 (SFCDTSEQ) match the Cysteine switch motif. An N-linked (GlcNAc...) asparagine glycan is attached at asparagine 212. The Peptidase M12B domain occupies 233–435 (ITLEIGLFLD…CSVREFNAFL (203 aa)). Histidine 388 contacts Zn(2+). The active site involves glutamate 389. 2 residues coordinate Zn(2+): histidine 392 and histidine 398. A disulfide bond links cysteine 405 and cysteine 410. Residues 464 to 546 (RLPGQRFTAD…TFGLTPVPID (83 aa)) form the Disintegrin domain. TSP type-1 domains follow at residues 708–759 (HQWE…RDCE), 761–802 (FGEW…RPCD), 804–852 (EGCW…QKCI), 853–898 (SQSW…QQCP), 903–952 (LSVW…GPCE), 955–1000 (YLTW…IACL), 1035–1083 (SIHS…NSCL), 1087–1133 (IWSD…PSCS), 1148–1200 (APRW…GSCS), 1203–1260 (AGGW…NVCS), 1265–1321 (DGGW…ARCH), 1324–1378 (DGGW…PACD), and 1382–1435 (DGEW…RQSP). 3 disulfides stabilise this stretch: cysteine 719-cysteine 751, cysteine 723-cysteine 758, and cysteine 735-cysteine 741. 6 disulfides stabilise this stretch: cysteine 816–cysteine 846, cysteine 820–cysteine 851, cysteine 831–cysteine 836, cysteine 862–cysteine 892, cysteine 866–cysteine 897, and cysteine 877–cysteine 882. Intrachain disulfides connect cysteine 1047–cysteine 1077, cysteine 1051–cysteine 1082, and cysteine 1062–cysteine 1067. Cystine bridges form between cysteine 1160/cysteine 1194, cysteine 1162/cysteine 1199, cysteine 1173/cysteine 1184, cysteine 1215/cysteine 1253, cysteine 1219/cysteine 1259, cysteine 1231/cysteine 1243, cysteine 1277/cysteine 1314, cysteine 1281/cysteine 1320, cysteine 1292/cysteine 1304, cysteine 1336/cysteine 1372, cysteine 1340/cysteine 1377, and cysteine 1351/cysteine 1362.

Requires Zn(2+) as cofactor. As to expression, in hermaphrodites, expressed in the vulva, head ganglia, ventral nerve cord and amphid neurons. Expressed in the rays of the male tail.

Its subcellular location is the secreted. Its function is as follows. Plays a role in ray morphogenesis in the male tail, probably by remodeling the extracellular matrix (ECM) in the cuticle. The protein is A disintegrin and metalloproteinase with thrombospondin motifs adt-1 of Caenorhabditis elegans.